The chain runs to 99 residues: Putative pterin-4-alpha-carbinolamine dehydratase (99 aa).

It belongs to the pterin-4-alpha-carbinolamine dehydratase family.

It carries out the reaction (4aS,6R)-4a-hydroxy-L-erythro-5,6,7,8-tetrahydrobiopterin = (6R)-L-erythro-6,7-dihydrobiopterin + H2O. The chain is Putative pterin-4-alpha-carbinolamine dehydratase from Synechococcus sp. (strain CC9311).